We begin with the raw amino-acid sequence, 496 residues long: Apolipoprotein N-acyltransferase (496 aa).

Transmembrane regions (helical) follow at residues 6–26 (IICFLLGILSGLVFAPTFFIP), 50–70 (FGYLFGFGHFLSGMYWISIGV), 77–97 (FWWAIPFALFGLPIILAFFIS), 114–134 (LIFCLLWVLFEWIRSWICTGL), 148–168 (ILIQPLSITGIYGLSFIVIYI), and 183–203 (LKILLASSMLILTVMVIYGAM). Residues 220–464 (VQPSIPQTAK…QGLIPQKLTT (245 aa)) enclose the CN hydrolase domain. E259 (proton acceptor) is an active-site residue. Residue K322 is part of the active site. C372 (nucleophile) is an active-site residue. The chain crosses the membrane as a helical span at residues 474-494 (FAMLLPIVFILLIHYLLSLIF).

Belongs to the CN hydrolase family. Apolipoprotein N-acyltransferase subfamily.

The protein resides in the cell inner membrane. It carries out the reaction N-terminal S-1,2-diacyl-sn-glyceryl-L-cysteinyl-[lipoprotein] + a glycerophospholipid = N-acyl-S-1,2-diacyl-sn-glyceryl-L-cysteinyl-[lipoprotein] + a 2-acyl-sn-glycero-3-phospholipid + H(+). It functions in the pathway protein modification; lipoprotein biosynthesis (N-acyl transfer). Its function is as follows. Catalyzes the phospholipid dependent N-acylation of the N-terminal cysteine of apolipoprotein, the last step in lipoprotein maturation. In Rickettsia typhi (strain ATCC VR-144 / Wilmington), this protein is Apolipoprotein N-acyltransferase.